A 449-amino-acid chain; its full sequence is Nuclear hormone receptor family member nhr-43 (449 aa).

Positions 44–122 (NIHCRVCERR…VGLNVDAVVG (79 aa)) form a DNA-binding region, nuclear receptor. 2 consecutive NR C4-type zinc fingers follow at residues 47–68 (CRVC…CRAC) and 84–105 (CRRG…CQKC). Residues 125–142 (SPDHVKTTSRDESVKKED) are compositionally biased toward basic and acidic residues. Positions 125-154 (SPDHVKTTSRDESVKKEDEESDTGSEGKSC) are disordered. The NR LBD domain occupies 200-449 (NYNEFTKSRL…SDLNAYLYSI (250 aa)).

Its subcellular location is the nucleus. In terms of biological role, ligand-activated transcription factor. Positively modulates expression of homeobox protein lin-39, perhaps by binding to the sequence motif 5'-TGAC-3' in regulatory regions of the lin-39 gene, acting in the embryo, and also in the vulval lineage. The chain is Nuclear hormone receptor family member nhr-43 from Caenorhabditis elegans.